We begin with the raw amino-acid sequence, 239 residues long: Pyridoxine 5'-phosphate synthase (239 aa).

Asn-7 contacts 3-amino-2-oxopropyl phosphate. 9 to 10 (DH) is a 1-deoxy-D-xylulose 5-phosphate binding site. Residue Arg-18 coordinates 3-amino-2-oxopropyl phosphate. His-43 functions as the Proton acceptor in the catalytic mechanism. Residues Arg-45 and His-50 each coordinate 1-deoxy-D-xylulose 5-phosphate. Catalysis depends on Glu-70, which acts as the Proton acceptor. Thr-100 serves as a coordination point for 1-deoxy-D-xylulose 5-phosphate. The active-site Proton donor is the His-191. Residues Gly-192 and 213–214 (GH) each bind 3-amino-2-oxopropyl phosphate.

Belongs to the PNP synthase family. As to quaternary structure, homooctamer; tetramer of dimers.

It localises to the cytoplasm. The enzyme catalyses 3-amino-2-oxopropyl phosphate + 1-deoxy-D-xylulose 5-phosphate = pyridoxine 5'-phosphate + phosphate + 2 H2O + H(+). The protein operates within cofactor biosynthesis; pyridoxine 5'-phosphate biosynthesis; pyridoxine 5'-phosphate from D-erythrose 4-phosphate: step 5/5. Its function is as follows. Catalyzes the complicated ring closure reaction between the two acyclic compounds 1-deoxy-D-xylulose-5-phosphate (DXP) and 3-amino-2-oxopropyl phosphate (1-amino-acetone-3-phosphate or AAP) to form pyridoxine 5'-phosphate (PNP) and inorganic phosphate. This Geobacter sulfurreducens (strain ATCC 51573 / DSM 12127 / PCA) protein is Pyridoxine 5'-phosphate synthase.